The chain runs to 360 residues: 3-isopropylmalate dehydrogenase (360 aa).

76–89 (GPKWEPLDYSLRPE) provides a ligand contact to NAD(+). Arg96, Arg106, Arg134, and Asp224 together coordinate substrate. The Mg(2+) site is built by Asp224, Asp248, and Asp252. 282-294 (GSAPDIAGRGIAN) is an NAD(+) binding site.

This sequence belongs to the isocitrate and isopropylmalate dehydrogenases family. LeuB type 1 subfamily. As to quaternary structure, homodimer. The cofactor is Mg(2+). It depends on Mn(2+) as a cofactor.

It is found in the cytoplasm. It carries out the reaction (2R,3S)-3-isopropylmalate + NAD(+) = 4-methyl-2-oxopentanoate + CO2 + NADH. It functions in the pathway amino-acid biosynthesis; L-leucine biosynthesis; L-leucine from 3-methyl-2-oxobutanoate: step 3/4. In terms of biological role, catalyzes the oxidation of 3-carboxy-2-hydroxy-4-methylpentanoate (3-isopropylmalate) to 3-carboxy-4-methyl-2-oxopentanoate. The product decarboxylates to 4-methyl-2 oxopentanoate. The sequence is that of 3-isopropylmalate dehydrogenase from Methylococcus capsulatus (strain ATCC 33009 / NCIMB 11132 / Bath).